A 400-amino-acid polypeptide reads, in one-letter code: Chaperone protein DnaJ (400 aa).

A J domain is found at 4-69; the sequence is DYYETLGVTR…DKRRRYDQFG (66 aa). The CR-type zinc-finger motif lies at 156 to 237; the sequence is GVEKTLKVKR…CYGEGIKLGE (82 aa). Cys169, Cys172, Cys185, Cys188, Cys211, Cys214, Cys225, and Cys228 together coordinate Zn(2+). CXXCXGXG motif repeat units follow at residues 169 to 176, 185 to 192, 211 to 218, and 225 to 232; these read CEVCNGTG, CQTCHGSG, CPTCGGEG, and CTACYGEG.

This sequence belongs to the DnaJ family. In terms of assembly, homodimer. The cofactor is Zn(2+).

The protein localises to the cytoplasm. In terms of biological role, participates actively in the response to hyperosmotic and heat shock by preventing the aggregation of stress-denatured proteins and by disaggregating proteins, also in an autonomous, DnaK-independent fashion. Unfolded proteins bind initially to DnaJ; upon interaction with the DnaJ-bound protein, DnaK hydrolyzes its bound ATP, resulting in the formation of a stable complex. GrpE releases ADP from DnaK; ATP binding to DnaK triggers the release of the substrate protein, thus completing the reaction cycle. Several rounds of ATP-dependent interactions between DnaJ, DnaK and GrpE are required for fully efficient folding. Also involved, together with DnaK and GrpE, in the DNA replication of plasmids through activation of initiation proteins. In Chlorobium chlorochromatii (strain CaD3), this protein is Chaperone protein DnaJ.